The following is a 128-amino-acid chain: KHDC1-like protein (128 aa).

The protein belongs to the KHDC1 family.

This is KHDC1-like protein (KHDC1L) from Homo sapiens (Human).